Reading from the N-terminus, the 529-residue chain is MQQRRPVRRALLSVSDKAGIVEFAQALSARGVELLSTGGTARLLAEKGLPVTEVSDYTGFPEMMDGRVKTLHPKVHGGILGRRGQDDAIMEEHQIQPIDMVVVNLYPFAQTVAREGCSLEDAVENIDIGGPTMVRSAAKNHRDVAIVVKSSDYDAIIKEMDANEGSLTLATRFNLAIKAFEHTAAYDSMIANYFGSMVPAYHGESKEAAGRFPRTLNLNFIKKQDMRYGENSHQQAAFYIEENVKEASVATATQVQGKALSYNNIADTDAALECVKEFAEPACVIVKHANPCGVAVSNSILDAYDRAYKTDPTSAFGGIIAFNRELDAETAQAIISRQFVEVIIAPSASEEALKITAAKQNVRVLICGQWGERAPGLDFKRVNGGLLVQDRDLGMVGAEELRVVTKRQPTEQELRDALFCWKVAKFVKSNAIVYAKNNMTIGIGAGQMSRVYSAKIAGIKAADEGLEVKGSSMASDAFFPFRDGIDAAAAAGVTCVIQPGGSIRDDEVIAAADEHGIAMLFTDMRHFRH.

Positions 1–148 (MQQRRPVRRA…KNHRDVAIVV (148 aa)) constitute an MGS-like domain. N6-acetyllysine is present on Lys287.

This sequence belongs to the PurH family.

The catalysed reaction is (6R)-10-formyltetrahydrofolate + 5-amino-1-(5-phospho-beta-D-ribosyl)imidazole-4-carboxamide = 5-formamido-1-(5-phospho-D-ribosyl)imidazole-4-carboxamide + (6S)-5,6,7,8-tetrahydrofolate. The enzyme catalyses IMP + H2O = 5-formamido-1-(5-phospho-D-ribosyl)imidazole-4-carboxamide. The protein operates within purine metabolism; IMP biosynthesis via de novo pathway; 5-formamido-1-(5-phospho-D-ribosyl)imidazole-4-carboxamide from 5-amino-1-(5-phospho-D-ribosyl)imidazole-4-carboxamide (10-formyl THF route): step 1/1. It functions in the pathway purine metabolism; IMP biosynthesis via de novo pathway; IMP from 5-formamido-1-(5-phospho-D-ribosyl)imidazole-4-carboxamide: step 1/1. This Escherichia coli O6:K15:H31 (strain 536 / UPEC) protein is Bifunctional purine biosynthesis protein PurH.